Reading from the N-terminus, the 255-residue chain is Triosephosphate isomerase (255 aa).

15–17 (NWK) serves as a coordination point for substrate. The active-site Electrophile is the H100. The active-site Proton acceptor is the E172. Substrate-binding positions include G178, S218, and 239 to 240 (GG).

The protein belongs to the triosephosphate isomerase family. As to quaternary structure, homodimer.

Its subcellular location is the cytoplasm. The catalysed reaction is D-glyceraldehyde 3-phosphate = dihydroxyacetone phosphate. It participates in carbohydrate biosynthesis; gluconeogenesis. The protein operates within carbohydrate degradation; glycolysis; D-glyceraldehyde 3-phosphate from glycerone phosphate: step 1/1. In terms of biological role, involved in the gluconeogenesis. Catalyzes stereospecifically the conversion of dihydroxyacetone phosphate (DHAP) to D-glyceraldehyde-3-phosphate (G3P). This Clostridium tetani (strain Massachusetts / E88) protein is Triosephosphate isomerase.